The following is a 186-amino-acid chain: Nicotinamide-nucleotide adenylyltransferase (186 aa).

It belongs to the archaeal NMN adenylyltransferase family.

The protein resides in the cytoplasm. The catalysed reaction is beta-nicotinamide D-ribonucleotide + ATP + H(+) = diphosphate + NAD(+). It participates in cofactor biosynthesis; NAD(+) biosynthesis; NAD(+) from nicotinamide D-ribonucleotide: step 1/1. The protein is Nicotinamide-nucleotide adenylyltransferase of Thermococcus sibiricus (strain DSM 12597 / MM 739).